We begin with the raw amino-acid sequence, 286 residues long: Pyridoxal kinase PdxY (286 aa).

Residues serine 9 and 44-45 (TQ) each bind substrate. 3 residues coordinate ATP: aspartate 111, glutamate 148, and lysine 181. Substrate is bound at residue aspartate 222.

It belongs to the pyridoxine kinase family. PdxY subfamily. In terms of assembly, homodimer. Mg(2+) serves as cofactor.

It catalyses the reaction pyridoxal + ATP = pyridoxal 5'-phosphate + ADP + H(+). The protein operates within cofactor metabolism; pyridoxal 5'-phosphate salvage; pyridoxal 5'-phosphate from pyridoxal: step 1/1. Functionally, pyridoxal kinase involved in the salvage pathway of pyridoxal 5'-phosphate (PLP). Catalyzes the phosphorylation of pyridoxal to PLP. The chain is Pyridoxal kinase PdxY from Actinobacillus pleuropneumoniae serotype 5b (strain L20).